We begin with the raw amino-acid sequence, 369 residues long: Histidine decarboxylase (369 aa).

A substrate-binding site is contributed by histidine 119. Lysine 230 carries the post-translational modification N6-(pyridoxal phosphate)lysine.

The protein belongs to the group II decarboxylase family. In terms of assembly, homotetramer. Pyridoxal 5'-phosphate serves as cofactor.

It carries out the reaction L-histidine + H(+) = histamine + CO2. This chain is Histidine decarboxylase, found in Mesorhizobium japonicum (strain LMG 29417 / CECT 9101 / MAFF 303099) (Mesorhizobium loti (strain MAFF 303099)).